The chain runs to 130 residues: Osteocrin (130 aa).

The signal sequence occupies residues 1-25 (MLDWRLASTHFILAMIVMLWGSGKA). Arginine 129 carries the post-translational modification Arginine amide.

This sequence belongs to the Osteocrin family. Interacts with NPR3. In terms of tissue distribution, expressed in skeletal muscle and to a much lesser extent in bone, brown adipose tissue, spleen and testis. Not expressed in neurons.

Its subcellular location is the secreted. Hormone that acts as a ligand for natriuretic peptide receptor NPR3/NPR-C and promotes bone growth and physical endurance in muscle. Acts as a regulator of osteoblast differentiation and bone growth by binding to natriuretic peptide receptor NPR3/NPR-C, thereby preventing binding between NPR3/NPR-C and natriuretic peptides, leading to increase cGMP production. Required to enhance physical endurance: induced following physical exercise in muscle and promotes cGMP production, probably by interacting with NPR3/NPR-C. May act as an autocrine and paracrine factor linked to glucose metabolism in skeletal muscle. This chain is Osteocrin, found in Mus musculus (Mouse).